The sequence spans 248 residues: Tabserin (248 aa).

Positions 1 to 19 (MLKYSALFLYLIYVGGSES) are cleaved as a signal peptide. The Peptidase S1 domain maps to 24–248 (IVGGVPVAEE…PYFENGLRKR (225 aa)). An intrachain disulfide couples Cys49 to Cys65. Catalysis depends on charge relay system residues His64 and Asp111. 2 cysteine pairs are disulfide-bonded: Cys175–Cys189 and Cys201–Cys226. Ser205 (charge relay system) is an active-site residue.

This sequence belongs to the peptidase S1 family. Expressed in salivary glands.

It is found in the secreted. Functionally, serine protease that inhibits blood coagulation in a dose-dependent manner. May act by destroying coagulant factors to inhibit blood coagulation. This chain is Tabserin, found in Tabanus yao (Horsefly).